The primary structure comprises 401 residues: MSQKLVLILNCGSSSLKFSILDPQTGEEKLSGLAEAFHLDDARIKWKLHGEKGNADLGAGAAHSEALNFIVNSIFPLDPSLKEDIVAIGHRIVHGGEKFTSSVVITDEVVQGIKDAVQFAPLHNPAHLIGIEEAFKMFPHLKDKNVAVFDTAFHQTMPEEAYLYALPYSLYREHGVRRYGAHGTSHFFVSQQAAERLNVPAEQVNVITCHLGNGASIAAVRHGQCIDTSMGLTPLEGLVMGTRSGDIDPAIVFYLHDNLGLSVEEINTLLTKKSGLLGLTEVTSDCRYAEDNYDKEASAKRALDVFSYRLAKYIGSYMAVIGERLDAIVFTGGIGENSSLVRELTLNHLKLFGYQVDSDKNKAARFGHEGVITADNTPVAMVIPTNEELVIAQDTARLCIA.

Mg(2+) is bound at residue Asn10. An ATP-binding site is contributed by Lys17. Arg91 lines the substrate pocket. The Proton donor/acceptor role is filled by Asp150. ATP is bound by residues His210–Gly214, Asp285–Arg287, and Gly333–Asn337. Glu387 contributes to the Mg(2+) binding site.

It belongs to the acetokinase family. Homodimer. Mg(2+) serves as cofactor. Mn(2+) is required as a cofactor.

It localises to the cytoplasm. The catalysed reaction is acetate + ATP = acetyl phosphate + ADP. It participates in metabolic intermediate biosynthesis; acetyl-CoA biosynthesis; acetyl-CoA from acetate: step 1/2. Functionally, catalyzes the formation of acetyl phosphate from acetate and ATP. Can also catalyze the reverse reaction. In Pasteurella multocida (strain Pm70), this protein is Acetate kinase.